The primary structure comprises 171 residues: uncharacterized protein (171 aa).

This is an uncharacterized protein from Rhizobium etli.